The chain runs to 281 residues: Probable superoxide dismutase [Fe] (281 aa).

4 residues coordinate Fe cation: H104, H152, D236, and H240.

Belongs to the iron/manganese superoxide dismutase family. It depends on Fe cation as a cofactor.

The enzyme catalyses 2 superoxide + 2 H(+) = H2O2 + O2. Its function is as follows. Destroys superoxide anion radicals which are normally produced within the cells and which are toxic to biological systems. This is Probable superoxide dismutase [Fe] (sodF) from Bacillus subtilis (strain 168).